The chain runs to 702 residues: Methionine--tRNA ligase (702 aa).

Positions 14 to 24 (PYANGPVHLGH) match the 'HIGH' region motif. C146, C149, C159, and C162 together coordinate Zn(2+). The 'KMSKS' region signature appears at 344–348 (KFSKS). K347 lines the ATP pocket. In terms of domain architecture, tRNA-binding spans 601–702 (DFLKVDLRVA…GDEINGQQIQ (102 aa)).

It belongs to the class-I aminoacyl-tRNA synthetase family. MetG type 1 subfamily. Homodimer. Requires Zn(2+) as cofactor.

Its subcellular location is the cytoplasm. The enzyme catalyses tRNA(Met) + L-methionine + ATP = L-methionyl-tRNA(Met) + AMP + diphosphate. Is required not only for elongation of protein synthesis but also for the initiation of all mRNA translation through initiator tRNA(fMet) aminoacylation. In Chlorobium limicola (strain DSM 245 / NBRC 103803 / 6330), this protein is Methionine--tRNA ligase.